Here is a 483-residue protein sequence, read N- to C-terminus: Allantoate deiminase 1 (483 aa).

Residues 1 to 30 (MYSATASNTFFLLSCFLLFCLLSAPSCVSM) form the signal peptide. Mn(2+) is bound by residues histidine 125, aspartate 136, glutamate 173, histidine 239, and histidine 457.

The protein belongs to the peptidase M20A family. Homodimer. Mn(2+) serves as cofactor. In terms of tissue distribution, expressed in roots, stems and leaves. Not detected in nodules.

It is found in the endoplasmic reticulum. The enzyme catalyses allantoate + H2O + 2 H(+) = (S)-2-ureidoglycine + NH4(+) + CO2. Its activity is regulated as follows. Inhibited by borate, fluoride, L-Asn and L-Asp. Involved in the catabolism of purine nucleotides. Can use allantoate as substrate. The sequential activity of AAH, UGLYAH and UAH allows a complete purine breakdown without the intermediate generation of urea. The chain is Allantoate deiminase 1 from Glycine max (Soybean).